A 205-amino-acid polypeptide reads, in one-letter code: Basigin (205 aa).

The signal sequence occupies residues 1-18 (MAAALFVLLGFALLGTHG). Residues 19–103 (ASGAAGTVFT…MGTANIQLHG (85 aa)) enclose the Ig-like C2-type domain. The Extracellular segment spans residues 19–205 (ASGAAGTVFT…AIITLRVRSH (187 aa)). 2 disulfides stabilise this stretch: C41/C87 and C126/C185. N-linked (GlcNAc...) asparagine glycans are attached at residues N44, N152, and N186. In terms of domain architecture, Ig-like V-type spans 105-199 (PRVKAVKSSE…SKGSDQAIIT (95 aa)).

Homooligomer. Interacts with VEGFA, KDR/VEGFR2, PPIA/CYPA, SLC16A12, SLC16A11, ATP1B2, MAG, L1CAM and AJAP1. Interacts with SLC16A1; interaction mediates SLC16A1 targeting to the plasma membrane. Interacts with SLC16A3; interaction mediates SLC16A3 targeting to the plasma membrane. Interacts with PPIL2; regulates BSG transport to the cell membrane. Interacts with XKR8; promoting its localization at the cell membrane. Interacts with SLC16A6; this interaction mediates targeting to the plasma membrane.

The protein localises to the cell membrane. It is found in the endoplasmic reticulum membrane. It localises to the basolateral cell membrane. Signaling receptor for cyclophilins, essential for PPIA/CYPA and PPIB/CYPB-dependent signaling related to chemotaxis and adhesion of immune cells. Plays an important role in targeting the monocarboxylate transporters SLC16A1/GLUT1, SLC16A3, SLC16A8, SLC16A11 and SLC16A12 to the plasma membrane. Acts as a coreceptor for vascular endothelial growth factor receptor 2 (KDR/VEGFR2) in endothelial cells enhancing its VEGFA-mediated activation and downstream signaling. Promotes angiogenesis through EPAS1/HIF2A-mediated up-regulation of VEGFA and KDR/VEGFR2 in endothelial cells. The chain is Basigin (BSG) from Bos taurus (Bovine).